Reading from the N-terminus, the 439-residue chain is Structure-specific endonuclease subunit SLX1 homolog (439 aa).

Disordered stretches follow at residues 1–28 (METFILSSDSDDDCPPPPKRRSIEGVPK) and 117–140 (DDDDDDEKESSTEHADDDLNLRAL). Residues 125-136 (ESSTEHADDDLN) are compositionally biased toward basic and acidic residues. The region spanning 166-253 (EFYGVYCLIS…PAVSKSLKEK (88 aa)) is the GIY-YIG domain. The SLX1-type zinc finger occupies 335-390 (CRLCGKDIEKLWGLVRCISQSCHSHFHSKCLAEHGLKNKNEYADQIYPLKSNCPIC).

It belongs to the SLX1 family. As to quaternary structure, forms a heterodimer with him-18/slx-4. It depends on a divalent metal cation as a cofactor.

It is found in the nucleus. Its function is as follows. Catalytic subunit of a heterodimeric structure-specific endonuclease that resolves DNA secondary structures generated during DNA repair and recombination. Has endonuclease activity towards branched DNA substrates, introducing single-strand cuts in duplex DNA close to junctions with ss-DNA (Potential). Has a preference for replication forks over 5' flap structures or Holliday junctions and shows much lower activity toward 3' flap structures. Required for proper crossover distribution through inhibition of crossover formation at the central region of chromosomes. The sequence is that of Structure-specific endonuclease subunit SLX1 homolog from Caenorhabditis briggsae.